The following is a 296-amino-acid chain: 4-diphosphocytidyl-2-C-methyl-D-erythritol kinase (296 aa).

The active site involves K14. Residue 97 to 107 (PMGAGMGGGSS) coordinates ATP. Residue D139 is part of the active site.

The protein belongs to the GHMP kinase family. IspE subfamily.

The enzyme catalyses 4-CDP-2-C-methyl-D-erythritol + ATP = 4-CDP-2-C-methyl-D-erythritol 2-phosphate + ADP + H(+). It functions in the pathway isoprenoid biosynthesis; isopentenyl diphosphate biosynthesis via DXP pathway; isopentenyl diphosphate from 1-deoxy-D-xylulose 5-phosphate: step 3/6. Its function is as follows. Catalyzes the phosphorylation of the position 2 hydroxy group of 4-diphosphocytidyl-2C-methyl-D-erythritol. This Polynucleobacter necessarius subsp. necessarius (strain STIR1) protein is 4-diphosphocytidyl-2-C-methyl-D-erythritol kinase.